A 204-amino-acid chain; its full sequence is FMN-dependent NADH:quinone oxidoreductase (204 aa).

FMN-binding positions include Ser10 and 15 to 17 (SLS).

It belongs to the azoreductase type 1 family. In terms of assembly, homodimer. Requires FMN as cofactor.

It carries out the reaction 2 a quinone + NADH + H(+) = 2 a 1,4-benzosemiquinone + NAD(+). The enzyme catalyses N,N-dimethyl-1,4-phenylenediamine + anthranilate + 2 NAD(+) = 2-(4-dimethylaminophenyl)diazenylbenzoate + 2 NADH + 2 H(+). Functionally, quinone reductase that provides resistance to thiol-specific stress caused by electrophilic quinones. Also exhibits azoreductase activity. Catalyzes the reductive cleavage of the azo bond in aromatic azo compounds to the corresponding amines. The sequence is that of FMN-dependent NADH:quinone oxidoreductase from Rhizobium johnstonii (strain DSM 114642 / LMG 32736 / 3841) (Rhizobium leguminosarum bv. viciae).